Consider the following 658-residue polypeptide: Carnitine O-palmitoyltransferase 2, mitochondrial (658 aa).

A mitochondrion-targeting transit peptide spans 1-25 (MMPRLLLRDWPRCPSLVLGAPSRPL). At 26-178 (SAVSGPAEYL…GLLEPEVFHL (153 aa)) the chain is on the mitochondrial matrix side. Position 69 is an N6-succinyllysine (K69). K79 is subject to N6-acetyllysine. K85 is modified (N6-succinyllysine). The note=Mitochondrial inner membrane intramembrane region spans 179-208 (NPARSDTDAFKRLIRFVPSSLSWYGAYLVN). Over 209–658 (AYPLDMSQYF…DALEGKAIKT (450 aa)) the chain is Mitochondrial matrix. The residue at position 239 (K239) is an N6-acetyllysine; alternate. K239 carries the post-translational modification N6-succinyllysine; alternate. At K305 the chain carries N6-acetyllysine. Catalysis depends on H372, which acts as the Proton acceptor. The residue at position 418 (K418) is an N6-acetyllysine; alternate. K418 is modified (N6-succinyllysine; alternate). N6-succinyllysine is present on residues K424 and K439. Residue 452–464 (GKEFLKKKKLSPD) coordinates CoA. The (R)-carnitine site is built by Y486, S488, and T499. An N6-acetyllysine; alternate mark is found at K510 and K544. 2 positions are modified to N6-succinyllysine; alternate: K510 and K544.

This sequence belongs to the carnitine/choline acetyltransferase family.

The protein resides in the mitochondrion inner membrane. It carries out the reaction (R)-carnitine + hexadecanoyl-CoA = O-hexadecanoyl-(R)-carnitine + CoA. It catalyses the reaction octanoyl-CoA + (R)-carnitine = O-octanoyl-(R)-carnitine + CoA. The catalysed reaction is decanoyl-CoA + (R)-carnitine = O-decanoyl-(R)-carnitine + CoA. The enzyme catalyses dodecanoyl-CoA + (R)-carnitine = O-dodecanoyl-R-carnitine + CoA. It carries out the reaction tetradecanoyl-CoA + (R)-carnitine = O-tetradecanoyl-(R)-carnitine + CoA. It catalyses the reaction (R)-carnitine + octadecanoyl-CoA = O-octadecanoyl-(R)-carnitine + CoA. The catalysed reaction is eicosanoyl-CoA + (R)-carnitine = O-eicosanoyl-(R)-carnitine + CoA. The enzyme catalyses (9Z)-tetradecenoyl-CoA + (R)-carnitine = O-(9Z)-tetradecenoyl-(R)-carnitine + CoA. It carries out the reaction (5Z)-tetradecenoyl-CoA + (R)-carnitine = O-(5Z)-tetradecenoyl-(R)-carnitine + CoA. It catalyses the reaction (R)-carnitine + (9Z)-octadecenoyl-CoA = O-(9Z)-octadecenoyl-(R)-carnitine + CoA. The catalysed reaction is 4,8-dimethylnonanoyl-CoA + (R)-carnitine = O-4,8-dimethylnonanoyl-(R)-carnitine + CoA. Its pathway is lipid metabolism; fatty acid beta-oxidation. Functionally, involved in the intramitochondrial synthesis of acylcarnitines from accumulated acyl-CoA metabolites. Reconverts acylcarnitines back into the respective acyl-CoA esters that can then undergo beta-oxidation, an essential step for the mitochondrial uptake of long-chain fatty acids and their subsequent beta-oxidation in the mitochondrion. Active with medium (C8-C12) and long-chain (C14-C18) acyl-CoA esters. The sequence is that of Carnitine O-palmitoyltransferase 2, mitochondrial from Mus musculus (Mouse).